We begin with the raw amino-acid sequence, 290 residues long: UPF0750 membrane protein YdeO (290 aa).

5 helical membrane passes run 18–38, 56–76, 83–103, 112–132, and 165–185; these read IIMV…VLIP, LFNL…VWLG, SFAL…SFFH, DTLL…GLAL, and LFVF…LSVI.

The protein belongs to the UPF0750 family.

It localises to the cell membrane. The chain is UPF0750 membrane protein YdeO (ydeO) from Bacillus subtilis (strain 168).